A 265-amino-acid chain; its full sequence is Cytochrome c oxidase subunit 3 (265 aa).

6 helical membrane passes run 16-36, 41-61, 81-101, 162-182, 200-220, and 245-265; these read PWPI…VMYM, GGAT…FVWW, GPRY…FALF, AVYA…FQGM, FFLA…FSIV, and WHFV…WGGI.

Belongs to the cytochrome c oxidase subunit 3 family. As to quaternary structure, component of the cytochrome c oxidase (complex IV, CIV), a multisubunit enzyme composed of a catalytic core of 3 subunits and several supernumerary subunits. The complex exists as a monomer or a dimer and forms supercomplexes (SCs) in the inner mitochondrial membrane with ubiquinol-cytochrome c oxidoreductase (cytochrome b-c1 complex, complex III, CIII).

Its subcellular location is the mitochondrion inner membrane. It catalyses the reaction 4 Fe(II)-[cytochrome c] + O2 + 8 H(+)(in) = 4 Fe(III)-[cytochrome c] + 2 H2O + 4 H(+)(out). In terms of biological role, component of the cytochrome c oxidase, the last enzyme in the mitochondrial electron transport chain which drives oxidative phosphorylation. The respiratory chain contains 3 multisubunit complexes succinate dehydrogenase (complex II, CII), ubiquinol-cytochrome c oxidoreductase (cytochrome b-c1 complex, complex III, CIII) and cytochrome c oxidase (complex IV, CIV), that cooperate to transfer electrons derived from NADH and succinate to molecular oxygen, creating an electrochemical gradient over the inner membrane that drives transmembrane transport and the ATP synthase. Cytochrome c oxidase is the component of the respiratory chain that catalyzes the reduction of oxygen to water. Electrons originating from reduced cytochrome c in the intermembrane space (IMS) are transferred via the dinuclear copper A center (CU(A)) of subunit 2 and heme A of subunit 1 to the active site in subunit 1, a binuclear center (BNC) formed by heme A3 and copper B (CU(B)). The BNC reduces molecular oxygen to 2 water molecules using 4 electrons from cytochrome c in the IMS and 4 protons from the mitochondrial matrix. This is Cytochrome c oxidase subunit 3 (COX3) from Helianthus annuus (Common sunflower).